The chain runs to 135 residues: ATP synthase epsilon chain (135 aa).

The protein belongs to the ATPase epsilon chain family. F-type ATPases have 2 components, CF(1) - the catalytic core - and CF(0) - the membrane proton channel. CF(1) has five subunits: alpha(3), beta(3), gamma(1), delta(1), epsilon(1). CF(0) has three main subunits: a, b and c.

The protein localises to the cell inner membrane. Produces ATP from ADP in the presence of a proton gradient across the membrane. The chain is ATP synthase epsilon chain from Rhodopseudomonas palustris (strain HaA2).